The following is a 120-amino-acid chain: Large ribosomal subunit protein uL18 (120 aa).

Belongs to the universal ribosomal protein uL18 family. As to quaternary structure, part of the 50S ribosomal subunit; part of the 5S rRNA/L5/L18/L25 subcomplex. Contacts the 5S and 23S rRNAs.

Its function is as follows. This is one of the proteins that bind and probably mediate the attachment of the 5S RNA into the large ribosomal subunit, where it forms part of the central protuberance. The polypeptide is Large ribosomal subunit protein uL18 (Bartonella bacilliformis (strain ATCC 35685 / KC583 / Herrer 020/F12,63)).